Consider the following 461-residue polypeptide: MKEFDTIAAVATPVGEGGISIIRISGDKSLDIVSSIFKGKNDRTLDDIKPYSMRYGFIIEKESKEMIDEVLVSYMKGPRSFTAEDTLEINCHGGVIPTKKILKELIKSGARLAEPGEFTKRAFLNGRIDLSQAEAVIDIIRSKTDLSMKSALKQAEGTLSKEINSIRNRMIKIIAHIEATVDYPEDDLEEITGQKIKVDLKEIINKIDNLISASEEGKILREGLNTVIVGKPNVGKSSLLNALINENKAIVTEIPGTTRDVIEEYINIDGIPIKIVDTAGIRETEDVVEKIGVEKSKEKIDEADLVIFMLDLSRKIDEEDIEIMDFIKNKKYIVLLNKLDLNKDLNEENHFIKELDSKYIIKTSVKNNSGLNELKECIKNLFFSGEIKSDELIVTNARHQEALIRSRESCIQAIETLSDEISIDLASIDIRNAWKYLGEITGDTLDENIIDKIFSEFCLGK.

Residues R23, E88, and R127 each contribute to the (6S)-5-formyl-5,6,7,8-tetrahydrofolate site. Positions 223-383 (GLNTVIVGKP…LKECIKNLFF (161 aa)) constitute a TrmE-type G domain. K(+) is bound at residue N233. GTP is bound by residues 233–238 (NVGKSS), 252–258 (TEIPGTT), and 277–280 (DTAG). Position 237 (S237) interacts with Mg(2+). Residues T252, I254, and T257 each contribute to the K(+) site. T258 lines the Mg(2+) pocket. Residue K461 coordinates (6S)-5-formyl-5,6,7,8-tetrahydrofolate.

This sequence belongs to the TRAFAC class TrmE-Era-EngA-EngB-Septin-like GTPase superfamily. TrmE GTPase family. As to quaternary structure, homodimer. Heterotetramer of two MnmE and two MnmG subunits. K(+) serves as cofactor.

It localises to the cytoplasm. In terms of biological role, exhibits a very high intrinsic GTPase hydrolysis rate. Involved in the addition of a carboxymethylaminomethyl (cmnm) group at the wobble position (U34) of certain tRNAs, forming tRNA-cmnm(5)s(2)U34. This Clostridium botulinum (strain Okra / Type B1) protein is tRNA modification GTPase MnmE.